Consider the following 474-residue polypeptide: UDP-N-acetylmuramate--L-alanine ligase (474 aa).

116 to 122 (GTHGKTT) is an ATP binding site.

It belongs to the MurCDEF family.

The protein resides in the cytoplasm. It catalyses the reaction UDP-N-acetyl-alpha-D-muramate + L-alanine + ATP = UDP-N-acetyl-alpha-D-muramoyl-L-alanine + ADP + phosphate + H(+). It functions in the pathway cell wall biogenesis; peptidoglycan biosynthesis. Its function is as follows. Cell wall formation. The polypeptide is UDP-N-acetylmuramate--L-alanine ligase (Hyphomonas neptunium (strain ATCC 15444)).